The chain runs to 129 residues: Small ribosomal subunit protein uS11 (129 aa).

The protein belongs to the universal ribosomal protein uS11 family. Part of the 30S ribosomal subunit. Interacts with proteins S7 and S18. Binds to IF-3.

Functionally, located on the platform of the 30S subunit, it bridges several disparate RNA helices of the 16S rRNA. Forms part of the Shine-Dalgarno cleft in the 70S ribosome. The protein is Small ribosomal subunit protein uS11 of Photobacterium profundum (strain SS9).